The chain runs to 163 residues: 3-isopropylmalate dehydratase small subunit (163 aa).

The protein belongs to the LeuD family. LeuD type 2 subfamily. In terms of assembly, heterodimer of LeuC and LeuD.

The enzyme catalyses (2R,3S)-3-isopropylmalate = (2S)-2-isopropylmalate. Its pathway is amino-acid biosynthesis; L-leucine biosynthesis; L-leucine from 3-methyl-2-oxobutanoate: step 2/4. Functionally, catalyzes the isomerization between 2-isopropylmalate and 3-isopropylmalate, via the formation of 2-isopropylmaleate. The chain is 3-isopropylmalate dehydratase small subunit from Brachyspira hyodysenteriae (strain ATCC 49526 / WA1).